Consider the following 280-residue polypeptide: Undecaprenyl-diphosphatase (280 aa).

8 helical membrane passes run 2–22 (FIIEIFISIIYGIIEGITEWL), 45–65 (AFMEMFNVVIQLGAILAVVVI), 86–106 (WQLWAKVVVAALPAAVIGLFL), 114–134 (FYNLVSVSVMLIVYGAAFIYL), 147–167 (LASLPYKTALQIGLFQILALF), 188–208 (SVVTEFTFYLGIPIMFGASGW), 223–243 (GQIFLLLVAMGVAFGVSLVVI), and 255–275 (FTIFGKYRIGLGGVLLVYAAI).

Belongs to the UppP family.

Its subcellular location is the cell membrane. The enzyme catalyses di-trans,octa-cis-undecaprenyl diphosphate + H2O = di-trans,octa-cis-undecaprenyl phosphate + phosphate + H(+). Catalyzes the dephosphorylation of undecaprenyl diphosphate (UPP). Confers resistance to bacitracin. In Streptococcus sanguinis (strain SK36), this protein is Undecaprenyl-diphosphatase.